The primary structure comprises 210 residues: MADAKELKQVLTGPIISNNPIALQILGVCSALAVTSKMETALVMTIALTAVTALSNLFISMIRNHIPSSVRIIVQMTIIASLVIVVDQVLQAYAYDVAKQLSVFVGLIITNCIVMGRAEAYAMKTPPMMSFMDGIGNGLGYGAILLSVGFVRELFGNGSLFGVEILSKISEGGWYQPNGLLLLPPSAFFLIASLIWIIRTIKPEQVEAKG.

The next 6 helical transmembrane spans lie at proline 14–valine 34, leucine 42–isoleucine 62, isoleucine 72–alanine 92, valine 103–methionine 123, phenylalanine 131–valine 151, and asparagine 178–isoleucine 198.

This sequence belongs to the NqrDE/RnfAE family. As to quaternary structure, composed of six subunits; NqrA, NqrB, NqrC, NqrD, NqrE and NqrF.

It localises to the cell inner membrane. The enzyme catalyses a ubiquinone + n Na(+)(in) + NADH + H(+) = a ubiquinol + n Na(+)(out) + NAD(+). NQR complex catalyzes the reduction of ubiquinone-1 to ubiquinol by two successive reactions, coupled with the transport of Na(+) ions from the cytoplasm to the periplasm. NqrA to NqrE are probably involved in the second step, the conversion of ubisemiquinone to ubiquinol. This Shewanella loihica (strain ATCC BAA-1088 / PV-4) protein is Na(+)-translocating NADH-quinone reductase subunit D.